The following is a 260-amino-acid chain: MALIRVLASLLILQLSYAVTPFDRIIGGFECNEYEHRSLVHLYNSSGFFCSGTLLNHEWVLTAAHCNRDDIQIKLGVHNVSVNYEDEQIRVPKEKLCCHSTNNCTQLGQDIMLIRLNSSVNYSEHIAPLSLPSNRPSMGSVCRVMGWGLLTSPEVTFPKVPHCVDINILHIQVCQAAYPSMSENYLLCAGVLEGGKDSCKGDSGGPLICNREIQGIVSWGGFPCAQLLEPGVYTKVFDYIDWIEGIIAGNTSVTCPSDNF.

Positions 1–18 (MALIRVLASLLILQLSYA) are cleaved as a signal peptide. A propeptide spanning residues 19-24 (VTPFDR) is cleaved from the precursor. In terms of domain architecture, Peptidase S1 spans 25-248 (IIGGFECNEY…YIDWIEGIIA (224 aa)). 6 disulfide bridges follow: C31–C163, C50–C66, C98–C255, C142–C209, C174–C188, and C199–C224. N44 is a glycosylation site (N-linked (GlcNAc...) asparagine). The Charge relay system role is filled by H65. N-linked (GlcNAc...) asparagine glycosylation is present at N79. D110 serves as the catalytic Charge relay system. Residues N117 and N121 are each glycosylated (N-linked (GlcNAc...) asparagine). The Charge relay system role is filled by S203. N-linked (GlcNAc...) asparagine glycosylation is present at N250.

Belongs to the peptidase S1 family. Snake venom subfamily. Monomer. As to expression, expressed by the venom gland.

It is found in the secreted. Its activity is regulated as follows. Completely inhibited by NPGB, PMSF, diisopropylfluorophosphate (DFP), benzamidine and soybean trypsin inhibitor. Not inhibited by EDTA. Functionally, snake venom serine protease that possesses potent fibrinogenolytic (on both alpha- (FGA) and beta-chains (FGB)) and amidolytic activities. Selectively cleaves Arg-|-Xaa or Lys-|-Xaa bonds. This Ophiophagus hannah (King cobra) protein is Alpha- and beta-fibrinogenase OhS1.